Reading from the N-terminus, the 155-residue chain is Small ribosomal subunit protein uS7cz/uS7cy (155 aa).

Belongs to the universal ribosomal protein uS7 family. Part of the 30S ribosomal subunit.

It is found in the plastid. It localises to the chloroplast. One of the primary rRNA binding proteins, it binds directly to 16S rRNA where it nucleates assembly of the head domain of the 30S subunit. The sequence is that of Small ribosomal subunit protein uS7cz/uS7cy (rps7-A) from Piper cenocladum (Ant piper).